The chain runs to 135 residues: MAFFKEFREFAMKGNVVDMAVGVIIGAAFGKIVSSLVADVIMPPLGLLIGGIDFKQFSLVLREAHGDIPAVILNYGAFIQTVFDFAIVAFAIFCAIKLINKMRRQEEEQPKAPPAPSAEETLLTEIRDLLKNQQK.

A run of 2 helical transmembrane segments spans residues phenylalanine 10–glycine 30 and glycine 76–isoleucine 96.

Belongs to the MscL family. In terms of assembly, homopentamer.

The protein resides in the cell inner membrane. In terms of biological role, channel that opens in response to stretch forces in the membrane lipid bilayer. May participate in the regulation of osmotic pressure changes within the cell. The polypeptide is Large-conductance mechanosensitive channel (Proteus mirabilis (strain HI4320)).